The following is a 156-amino-acid chain: CD-NTase/cGAS isopeptidase (156 aa).

In terms of domain architecture, MPN spans 9–147 (IDDFDNHVVI…WIGKKIKNDI (139 aa)). The Proton donor/acceptor role is filled by Glu-38. Residues His-100, His-102, and Asp-113 each coordinate Zn(2+). Positions 100 to 113 (HTHPEDFPHPSFID) match the JAMM motif motif.

The protein belongs to the peptidase M67B family. Cap3 isopeptidase subfamily.

Metalloprotease priming reversal component of a CBASS antivirus system. CBASS (cyclic oligonucleotide-based antiphage signaling system) provides immunity against bacteriophages. The CD-NTase protein (DncV) synthesizes cyclic nucleotides in response to infection; these serve as specific second messenger signals. The signals activate a diverse range of effectors, leading to bacterial cell death and thus abortive phage infection. A type II-A(GA) CBASS system. In terms of biological role, reverses the primed state of DncV, the CD-NTase, cleaving it from cellular proteins. Cleaves a Sumo-DncV-DncV fusion protein precisely between the 2 DncV moieties. Its function is as follows. Protects E.coli against phage infection. When capV and dncV are introduced in E.coli MG1655 there is 1000-fold protection against phage P1; protection against other phage (T4, T5 and T6) requires the 2 subsequent genes. In another paper the capV-dncV-cap2-cap3 operon gives 10(4)-10(5)-fold protection against phages lambda, T2, T4 and T6, about 1000-fold protection against P1 and 10-fold protection against T5. This Escherichia coli (strain TW11681) protein is CD-NTase/cGAS isopeptidase.